A 199-amino-acid polypeptide reads, in one-letter code: Ras-related and estrogen-regulated growth inhibitor (199 aa).

GTP contacts are provided by residues 13–20, 60–64, and 118–121; these read GRAGVGKS, DTAGQ, and NKAD.

Belongs to the small GTPase superfamily. Ras family.

The protein localises to the cytoplasm. It catalyses the reaction GTP + H2O = GDP + phosphate + H(+). Functionally, binds GDP/GTP and possesses intrinsic GTPase activity. Has higher affinity for GDP than for GTP. The polypeptide is Ras-related and estrogen-regulated growth inhibitor (RERG) (Bos taurus (Bovine)).